Here is a 525-residue protein sequence, read N- to C-terminus: 2-isopropylmalate synthase (525 aa).

A Pyruvate carboxyltransferase domain is found at 5 to 267; sequence VIIFDTTLRD…HTGIHHQEIY (263 aa). Residues Asp14, His202, His204, and Asn238 each contribute to the Mn(2+) site. Positions 392 to 525 are regulatory domain; that stretch reads RLEYFSVQSS…NNSQDMQETV (134 aa).

This sequence belongs to the alpha-IPM synthase/homocitrate synthase family. LeuA type 1 subfamily. Homodimer. It depends on Mn(2+) as a cofactor.

It localises to the cytoplasm. It carries out the reaction 3-methyl-2-oxobutanoate + acetyl-CoA + H2O = (2S)-2-isopropylmalate + CoA + H(+). Its pathway is amino-acid biosynthesis; L-leucine biosynthesis; L-leucine from 3-methyl-2-oxobutanoate: step 1/4. Functionally, catalyzes the condensation of the acetyl group of acetyl-CoA with 3-methyl-2-oxobutanoate (2-ketoisovalerate) to form 3-carboxy-3-hydroxy-4-methylpentanoate (2-isopropylmalate). The polypeptide is 2-isopropylmalate synthase (Sodalis glossinidius (strain morsitans)).